We begin with the raw amino-acid sequence, 86 residues long: Large ribosomal subunit protein bL31B (86 aa).

It belongs to the bacterial ribosomal protein bL31 family. Type B subfamily. In terms of assembly, part of the 50S ribosomal subunit.

The polypeptide is Large ribosomal subunit protein bL31B (Burkholderia lata (strain ATCC 17760 / DSM 23089 / LMG 22485 / NCIMB 9086 / R18194 / 383)).